A 5289-amino-acid polypeptide reads, in one-letter code: Mucin-2 (5289 aa).

Residues 1–20 form the signal peptide; it reads MGLPLARLAAVCLALSLAGG. Ser21 carries the phosphoserine modification. Cu(2+) is bound at residue His34. The 173-residue stretch at 35–207 folds into the VWFD 1 domain; that stretch reads NVCSTWGNFH…KINQPDVVCE (173 aa). Intrachain disulfides connect Cys37/Cys169, Cys59/Cys206, Cys67/Cys166, Cys218/Cys255, Cys225/Cys250, Cys237/Cys275, Cys257/Cys263, Cys265/Cys291, Cys295/Cys329, Cys308/Cys321, Cys312/Cys351, Cys331/Cys345, Cys353/Cys375, Cys370/Cys387, Cys373/Cys382, Cys391/Cys528, Cys413/Cys563, Cys435/Cys443, Cys574/Cys619, Cys588/Cys614, Cys601/Cys639, Cys621/Cys627, Cys629/Cys654, Cys661/Cys698, Cys674/Cys688, Cys678/Cys718, Cys700/Cys712, Cys720/Cys742, and Cys740/Cys749. Asp49 is a binding site for Ca(2+). Positions 146 and 154 each coordinate Cu(+). Glu156 is a binding site for Cu(2+). An N-linked (GlcNAc...) asparagine glycan is attached at Asn163. Ca(2+) is bound by residues Asp171, Asn173, Leu175, and Glu180. Residue His277 participates in Cu(2+) binding. Positions 295–351 constitute a TIL domain; the sequence is CPGNLVYLESGSPCMDTCSHLEVSSLCEEHRMDGCFCPEGTVYDDIGDSGCVPVSQC. Position 324 (His324) interacts with Cu(2+). Met326 lines the Cu(+) pocket. The VWFD 2 domain maps to 389 to 564; the sequence is GTCALEGGSH…NTWKAQSSCH (176 aa). Asp403 contributes to the Ca(2+) binding site. The N-linked (GlcNAc...) asparagine glycan is linked to Asn423. Ca(2+) is bound by residues Asn530, Asn532, Leu534, Asp537, and Asp538. Residue Asn670 is glycosylated (N-linked (GlcNAc...) asparagine). Residue Asn770 is glycosylated (N-linked (GlcNAc...) asparagine). Cystine bridges form between Cys784-Cys820, Cys802-Cys814, Cys822-Cys844, Cys839-Cys856, Cys842-Cys851, Cys860-Cys992, Cys882-Cys1027, Cys891-Cys989, Cys909-Cys916, Cys1037-Cys1080, Cys1051-Cys1075, Cys1062-Cys1102, Cys1082-Cys1090, Cys1092-Cys1117, Cys1108-Cys1137, Cys1121-Cys1163, Cys1145-Cys1187, Cys1167-Cys1181, Cys1189-Cys1213, Cys1208-Cys1238, and Cys1211-Cys1221. In terms of domain architecture, VWFD 3 spans 858–1028; it reads GTCSIYGSGH…NSWKEAPTCP (171 aa). Asp872 lines the Ca(2+) pocket. Residue Asn894 is glycosylated (N-linked (GlcNAc...) asparagine). Residues Asn994, Asp996, Arg998, Asn1001, and Asp1002 each coordinate Ca(2+). N-linked (GlcNAc...) asparagine glycosylation is found at Asn1139 and Asn1154. 3 N-linked (GlcNAc...) asparagine glycosylation sites follow: Asn1215, Asn1230, and Asn1246. Thr1266, Thr1267, Thr1269, Thr1270, Thr1272, Thr1275, Thr1276, Thr1281, Thr1282, and Thr1287 each carry an O-linked (GalNAc) threonine glycan. Ser1291 and Ser1292 each carry an O-linked (GalNAc) serine glycan. The O-linked (GalNAc) threonine glycan is linked to Thr1293. O-linked (GalNAc) serine glycosylation is present at Ser1296. Thr1297 carries O-linked (GalNAc) threonine glycosylation. 10 residues coordinate Ca(2+): Asn1310, Asp1312, His1313, Ser1316, Asp1319, Gly1321, Asp1322, Glu1324, Asp1381, and Tyr1382. 5 stretches are compositionally biased toward pro residues: residues 1399-1411, 1419-1510, 1520-1549, 1559-1628, and 1638-1679; these read PSPP…PPPT, TTTP…PITP, and TTTP…PPTT. A disordered region spans residues 1399 to 1773; the sequence is PSPPTTTPSP…SITPPTFSPF (375 aa). Tandem repeats lie at residues 1401–1416, 1417–1432, 1433–1448, 1449–1464, 1465–1471, and 1472–1478. The tract at residues 1401 to 1747 is approximate repeats; sequence PPTTTPSPPP…SPPTTTMTTL (347 aa). A 7A repeat occupies 1479–1494; that stretch reads PPTTTPSPPTTTTTTP. One copy of the 7B repeat lies at 1495 to 1517; it reads PPTTTPSPPTTTPITPPASTTTL. Residues 1518–1533 form an 8A repeat; that stretch reads PPTTTPSPPTTTTTTP. An 8B repeat occupies 1534-1556; sequence PPTTTPSPPTTTPITPPTSTTTL. Residues 1557-1572 form a 9A repeat; it reads PPTTTPSPPPTTTTTP. A 9B repeat occupies 1573 to 1596; the sequence is PPTTTPSPPTTTTPSPPTITTTTP. The 10A repeat unit spans residues 1597 to 1612; the sequence is PPTTTPSPPTTTTTTP. The 10B repeat unit spans residues 1613 to 1635; it reads PPTTTPSPPTTTPITPPTSTTTL. The 11A repeat unit spans residues 1636 to 1651; that stretch reads PPTTTPSPPPTTTTTP. The 11B repeat unit spans residues 1652–1675; that stretch reads PPTTTPSPPTTTTPSPPITTTTTP. 5 repeat units span residues 1676–1683, 1684–1699, 1700–1715, 1716–1731, and 1732–1747. Composition is skewed to low complexity over residues 1680 to 1720 and 1741 to 1759; these read TPSS…STTT and TTTM…LTTT. Residues 1760–1770 show a composition bias toward pro residues; it reads PLPPSITPPTF. Asn1787 and Asn1820 each carry an N-linked (GlcNAc...) asparagine glycan. Low complexity-rich tracts occupy residues 1885–2158, 2165–4238, 4269–4315, and 4329–4430; these read MTTT…TMVT, GTQT…QTPT, TTVT…STAP, and STPQ…PSII. 2 disordered regions span residues 1885–4238 and 4269–4430; these read MTTT…QTPT and TTVT…PSII. N-linked (GlcNAc...) asparagine glycans are attached at residues Asn4449, Asn4461, Asn4472, and Asn4483. The disordered stretch occupies residues 4492-4524; the sequence is PTPTPSKSTPTPSKPSSTPSKPTPGTKPPECPD. Residues 4496 to 4511 show a composition bias toward low complexity; sequence PSKSTPTPSKPSSTPS. Residues 4512-4522 are compositionally biased toward pro residues; that stretch reads KPTPGTKPPEC. N-linked (GlcNAc...) asparagine glycans are attached at residues Asn4532, Asn4548, and Asn4612. A VWFD 4 domain is found at 4589–4772; the sequence is CYCTGWGDPH…VNDPSKPHCP (184 aa). 3 cysteine pairs are disulfide-bonded: Cys4591–Cys4732, Cys4613–Cys4771, and Cys4637–Cys4645. 2 N-linked (GlcNAc...) asparagine glycosylation sites follow: Asn4726 and Asn4737. The interval 4770-4795 is disordered; sequence HCPHSSSTTKRPAVTVPGGGKTTPHK. N-linked (GlcNAc...) asparagine glycans are attached at residues Asn4862, Asn4897, Asn4991, Asn4998, Asn5065, Asn5080, Asn5129, Asn5148, and Asn5179. In terms of domain architecture, VWFC 1 spans 4927–4996; it reads CVGPDNVPRE…DTCCNITVCK (70 aa). Residues 5034 to 5101 enclose the VWFC 2 domain; sequence GVCVHGNAEY…APGECCKKCE (68 aa). 4 cysteine pairs are disulfide-bonded: Cys5185-Cys5232, Cys5199-Cys5246, Cys5208-Cys5262, and Cys5212-Cys5264. The region spanning 5185–5270 is the CTCK domain; that stretch reads CSTVPVTTEV…SCQCQDTVCG (86 aa).

In terms of assembly, homomultimer; disulfide-linked. The N- and C-terminus mediate their assembly into higher order structures to form filaments. The CTCK domains of two polypeptides associate in the endoplasmic reticulum to generate intermolecularly disulfide-bonded dimers. These dimers progress to the Golgi apparatus, which is a more acidic environment than the endoplasmic reticulum. Under acidic conditions, the N-termini form non-covalent intermolecular interactions that juxtapose assemblies of the third VWD domain (VWD3) from different CTCK-linked dimers. The VWD3 assemblies then become disulfide bonded to one another to produce long, disulfide-linked polymers that remain highly compact until secretion. Interacts with FCGBP. Interacts with AGR2; disulfide-linked. (Microbial infection) Interacts in vitro with L.monocytogenes internalin proteins InlB, InlC and InlJ; for InlC binding is slightly better at pH 5.5, (the pH of the intestine) than at pH 7.4. O-glycosylated. O-glycosylation is required for mucin assembly. Goblet cells synthesize two forms of mucin that differ in branched chain O-glycosylation and the site of production in the colon. Post-translationally, may undergo proteolytic cleavage in the outer mucus layer of the colon, contributing to the expanded volume and loose nature of this layer which allows for bacterial colonization in contrast to the inner mucus layer which is dense and devoid of bacteria. In terms of processing, at low pH of 6 and under, undergoes autocatalytic cleavage in vitro in the N-terminal region of the fourth VWD domain. It is likely that this also occurs in vivo and is triggered by the low pH of the late secretory pathway. In terms of tissue distribution, colon, small intestine, colonic tumors, bronchus, cervix and gall bladder.

Its subcellular location is the secreted. Coats the epithelia of the intestines and other mucus membrane-containing organs to provide a protective, lubricating barrier against particles and infectious agents at mucosal surfaces. Major constituent of the colon mucus, which is mainly formed by large polymeric networks of MUC2 secreted by goblet cells that cover the exposed surfaces of intestine. MUC2 networks form hydrogels that guard the underlying epithelium from pathogens and other hazardous matter entering from the outside world, while permitting nutrient absorption and gas exchange. Acts as a divalent copper chaperone that protects intestinal cells from copper toxicity and facilitates nutritional copper unptake into cells. Binds both Cu(2+) and its reduced form, Cu(1+), at two juxtaposed binding sites: Cu(2+), once reduced to Cu(1+) by vitamin C (ascorbate) or other dietary antioxidants, transits to the other binding site. MUC2-bound Cu(1+) is protected from oxidation in aerobic environments, and can be released for nutritional delivery to cells. Mucin gels store antimicrobial molecules that participate in innate immunity. Mucin glycoproteins also house and feed the microbiome, lubricate tissue surfaces, and may facilitate the removal of contaminants and waste products from the body. Goblet cells synthesize two forms of MUC2 mucin that differ in branched chain O-glycosylation and the site of production in the colon: a (1) 'thick' mucus that wraps the microbiota to form fecal pellets is produced in the proximal, ascending colon. 'Thick' mucus transits along the descending colon and is lubricated by a (2) 'thin' MUC2 mucus produced in the distal colon which adheres to the 'thick' mucus. This Homo sapiens (Human) protein is Mucin-2.